The primary structure comprises 1029 residues: Beta-galactosidase 2 (1029 aa).

N104 and D203 together coordinate substrate. Residue D203 coordinates Na(+). Residues E418, H420, and E463 each contribute to the Mg(2+) site. Substrate-binding positions include E463 and E539 to H542. Residue E463 is the Proton donor of the active site. The Nucleophile role is filled by E539. N599 contributes to the Mg(2+) binding site. F603 and N606 together coordinate Na(+). N606 and W1004 together coordinate substrate.

It belongs to the glycosyl hydrolase 2 family. In terms of assembly, homotetramer. Mg(2+) is required as a cofactor. The cofactor is Na(+).

It catalyses the reaction Hydrolysis of terminal non-reducing beta-D-galactose residues in beta-D-galactosides.. The polypeptide is Beta-galactosidase 2 (Enterobacter cloacae).